The primary structure comprises 62 residues: DNA gyrase inhibitor YacG (62 aa).

4 residues coordinate Zn(2+): Cys-8, Cys-11, Cys-27, and Cys-31.

This sequence belongs to the DNA gyrase inhibitor YacG family. In terms of assembly, interacts with GyrB. Requires Zn(2+) as cofactor.

In terms of biological role, inhibits all the catalytic activities of DNA gyrase by preventing its interaction with DNA. Acts by binding directly to the C-terminal domain of GyrB, which probably disrupts DNA binding by the gyrase. The polypeptide is DNA gyrase inhibitor YacG (Actinobacillus pleuropneumoniae serotype 5b (strain L20)).